Reading from the N-terminus, the 136-residue chain is Ribonuclease P protein component (136 aa).

It belongs to the RnpA family. As to quaternary structure, consists of a catalytic RNA component (M1 or rnpB) and a protein subunit.

The catalysed reaction is Endonucleolytic cleavage of RNA, removing 5'-extranucleotides from tRNA precursor.. Functionally, RNaseP catalyzes the removal of the 5'-leader sequence from pre-tRNA to produce the mature 5'-terminus. It can also cleave other RNA substrates such as 4.5S RNA. The protein component plays an auxiliary but essential role in vivo by binding to the 5'-leader sequence and broadening the substrate specificity of the ribozyme. This is Ribonuclease P protein component from Burkholderia mallei (strain NCTC 10247).